A 476-amino-acid chain; its full sequence is Glycogen synthase (476 aa).

Residue Lys-15 participates in ADP-alpha-D-glucose binding.

Belongs to the glycosyltransferase 1 family. Bacterial/plant glycogen synthase subfamily.

It carries out the reaction [(1-&gt;4)-alpha-D-glucosyl](n) + ADP-alpha-D-glucose = [(1-&gt;4)-alpha-D-glucosyl](n+1) + ADP + H(+). Its pathway is glycan biosynthesis; glycogen biosynthesis. Functionally, synthesizes alpha-1,4-glucan chains using ADP-glucose. This is Glycogen synthase from Yersinia pseudotuberculosis serotype IB (strain PB1/+).